Reading from the N-terminus, the 350-residue chain is F(420)H(2) dehydrogenase subunit H (350 aa).

The next 8 membrane-spanning stretches (helical) occupy residues 21 to 41 (GTVG…AVWI), 94 to 114 (VFML…AVFI), 128 to 148 (ISIL…FMAA), 173 to 193 (PLGI…IIDI), 200 to 220 (FVWN…ALMA), 261 to 281 (ILGS…PAFV), 288 to 308 (GLIA…MTII), and 330 to 350 (LLPL…YLGA).

The protein belongs to the complex I subunit 1 family. In terms of assembly, the FPO complex is composed of at least 13 different subunits. FpoA, FpoH, FpoJ, FpoK, FpoL, FpoM and FpoN proteins constitute the membrane sector of the complex.

The protein resides in the cell membrane. It catalyses the reaction methanophenazine + reduced coenzyme F420-(gamma-L-Glu)(n) = dihydromethanophenazine + oxidized coenzyme F420-(gamma-L-Glu)(n) + H(+). Functionally, component of the F(420)H(2) dehydrogenase (FPO complex) which is part of the energy-conserving F(420)H(2):heterodisulfide oxidoreductase system. The membrane-bound electron transfer system of the complex plays an important role in the metabolism of methylotrophic methanogens when the organisms grow on methanol or methylamines. Catalyzes the oxidation of methanophenazine to dihydromethanophenazine. It shuttles electrons from F(420)H(2), via FAD and iron-sulfur (Fe-S) centers, to methanophenazine (an electron carrier in the membrane). It couples the redox reaction to proton translocation (for every two electrons transferred, two hydrogen ions are translocated across the cytoplasmic membrane), and thus conserves the redox energy in a proton gradient. It also catalyzes the oxidation of F(420)H(2) with quinones such as 2,3-dimethyl-1,4-naphthoquinone, 2-methyl-1,4-naphthoquinone and tetramethyl-p-benzoquinone. This is F(420)H(2) dehydrogenase subunit H from Methanosarcina mazei (strain ATCC BAA-159 / DSM 3647 / Goe1 / Go1 / JCM 11833 / OCM 88) (Methanosarcina frisia).